The sequence spans 175 residues: Ribosome maturation factor RimM (175 aa).

One can recognise a PRC barrel domain in the interval 95–175; sequence EEGDYYWHDL…TITVDWDAGF (81 aa).

The protein belongs to the RimM family. As to quaternary structure, binds ribosomal protein uS19.

The protein resides in the cytoplasm. Functionally, an accessory protein needed during the final step in the assembly of 30S ribosomal subunit, possibly for assembly of the head region. Essential for efficient processing of 16S rRNA. May be needed both before and after RbfA during the maturation of 16S rRNA. It has affinity for free ribosomal 30S subunits but not for 70S ribosomes. This is Ribosome maturation factor RimM from Glaesserella parasuis serovar 5 (strain SH0165) (Haemophilus parasuis).